Here is a 160-residue protein sequence, read N- to C-terminus: 3-dehydroquinate dehydratase (160 aa).

Tyrosine 28 functions as the Proton acceptor in the catalytic mechanism. 3 residues coordinate substrate: asparagine 79, histidine 85, and aspartate 92. Residue histidine 105 is the Proton donor of the active site. Residues 106-107 (MS) and arginine 116 each bind substrate.

It belongs to the type-II 3-dehydroquinase family. Homododecamer.

It catalyses the reaction 3-dehydroquinate = 3-dehydroshikimate + H2O. It functions in the pathway metabolic intermediate biosynthesis; chorismate biosynthesis; chorismate from D-erythrose 4-phosphate and phosphoenolpyruvate: step 3/7. In terms of biological role, catalyzes a trans-dehydration via an enolate intermediate. The chain is 3-dehydroquinate dehydratase from Gloeobacter violaceus (strain ATCC 29082 / PCC 7421).